Reading from the N-terminus, the 148-residue chain is 3-dehydroquinate dehydratase (148 aa).

Tyrosine 24 serves as the catalytic Proton acceptor. Residues asparagine 80, histidine 86, and aspartate 93 each contribute to the substrate site. Histidine 106 functions as the Proton donor in the catalytic mechanism. Residues 107–108 (IS) and arginine 117 each bind substrate.

It belongs to the type-II 3-dehydroquinase family. As to quaternary structure, homododecamer.

The enzyme catalyses 3-dehydroquinate = 3-dehydroshikimate + H2O. Its pathway is metabolic intermediate biosynthesis; chorismate biosynthesis; chorismate from D-erythrose 4-phosphate and phosphoenolpyruvate: step 3/7. Functionally, catalyzes a trans-dehydration via an enolate intermediate. This Acidovorax ebreus (strain TPSY) (Diaphorobacter sp. (strain TPSY)) protein is 3-dehydroquinate dehydratase.